Reading from the N-terminus, the 814-residue chain is Exostosin-like-3 homolog (814 aa).

The Cytoplasmic portion of the chain corresponds to 1–14; it reads MAIKLNGSSRSFVP. The helical; Signal-anchor for type II membrane protein transmembrane segment at 15-35 threads the bilayer; sequence SLRVSAFLIFIFFVITYIIIY. Asparagine 36, asparagine 227, asparagine 297, asparagine 322, asparagine 454, and asparagine 492 each carry an N-linked (GlcNAc...) asparagine glycan. The Lumenal segment spans residues 36-814; that stretch reads NVSFSEPSWI…QNHQKCFKYV (779 aa). Arginine 570, asparagine 595, asparagine 620, arginine 625, aspartate 641, aspartate 642, and aspartate 643 together coordinate UDP-N-acetyl-alpha-D-glucosamine. Aspartate 643 provides a ligand contact to Mn(2+). Asparagine 685 is a glycosylation site (N-linked (GlcNAc...) asparagine). Cysteine 726 and cysteine 774 are joined by a disulfide. UDP-N-acetyl-alpha-D-glucosamine is bound by residues glutamate 727, aspartate 728, and arginine 771. Aspartate 728 is a catalytic residue.

The protein belongs to the glycosyltransferase 47 family. In terms of assembly, interacts with rib-1. The cofactor is Mn(2+).

It localises to the endoplasmic reticulum membrane. Its subcellular location is the golgi apparatus membrane. It carries out the reaction 3-O-(beta-D-GlcA-(1-&gt;3)-beta-D-Gal-(1-&gt;3)-beta-D-Gal-(1-&gt;4)-beta-D-Xyl)-L-seryl-[protein] + UDP-N-acetyl-alpha-D-glucosamine = 3-O-(alpha-D-GlcNAc-(1-&gt;4)-beta-D-GlcA-(1-&gt;3)-beta-D-Gal-(1-&gt;3)-beta-D-Gal-(1-&gt;4)-beta-D-Xyl)-L-seryl-[protein] + UDP + H(+). The catalysed reaction is 3-O-{[(1-&gt;4)-beta-D-GlcA-(1-&gt;4)-alpha-D-GlcNAc](n)-(1-&gt;4)-beta-D-GlcA-(1-&gt;3)-beta-D-Gal-(1-&gt;3)-beta-D-Gal-(1-&gt;4)-beta-D-Xyl}-L-seryl-[protein] + UDP-N-acetyl-alpha-D-glucosamine = 3-O-{alpha-D-GlcNAc-[(1-&gt;4)-beta-D-GlcA-(1-&gt;4)-alpha-D-GlcNAc](n)-(1-&gt;4)-beta-D-GlcA-(1-&gt;3)-beta-D-Gal-(1-&gt;3)-beta-D-Gal-(1-&gt;4)-beta-D-Xyl}-L-seryl-[protein] + UDP + H(+). It catalyses the reaction 3-O-{alpha-D-GlcNAc-[(1-&gt;4)-beta-D-GlcA-(1-&gt;4)-alpha-D-GlcNAc](n)-(1-&gt;4)-beta-D-GlcA-(1-&gt;3)-beta-D-Gal-(1-&gt;3)-beta-D-Gal-(1-&gt;4)-beta-D-Xyl}-L-seryl-[protein] + UDP-alpha-D-glucuronate = 3-O-{[(1-&gt;4)-beta-D-GlcA-(1-&gt;4)-alpha-D-GlcNAc](n+1)-(1-&gt;4)-beta-D-GlcA-(1-&gt;3)-beta-D-Gal-(1-&gt;3)-beta-D-Gal-(1-&gt;4)-beta-D-Xyl}-L-seryl-[protein] + UDP + H(+). It participates in glycan metabolism; heparan sulfate biosynthesis. Its activity is regulated as follows. Binding to rib-1 is required for GlcAT-II activity and for increasing GlcNAc-II activity in vitro. Functionally, glycosyltransferase required for the biosynthesis of heparan sulfate. Initiates heparan sulfate synthesis by transferring GlcNAc to the (GlcA-Gal-Gal-Xyl-)Ser core linker (GlcNAcT-I activity). In association with rib-1, is also responsible for the alternating addition of beta-1-4-linked glucuronic acid (GlcA) and alpha-1-4-linked N-acetylglucosamine (GlcNAc) units to nascent heparan sulfate chains (GlcNAcT-II and GlcAT-II activities). Required for normal ventral epidermal enclosure during the early stages of embryonic development. In addition, involved in the elongation of the pharyngeal isthmus during the later stages of embryonic development. Involved in the directed migration of hermaphrodite-specific neurons. The protein is Exostosin-like-3 homolog (rib-2) of Caenorhabditis elegans.